The following is a 354-amino-acid chain: UPF0425 pyridoxal phosphate-dependent protein MMP0002 (354 aa).

An N6-(pyridoxal phosphate)lysine modification is found at K210.

The protein belongs to the UPF0425 family. Requires pyridoxal 5'-phosphate as cofactor.

This Methanococcus maripaludis (strain DSM 14266 / JCM 13030 / NBRC 101832 / S2 / LL) protein is UPF0425 pyridoxal phosphate-dependent protein MMP0002.